The following is a 229-amino-acid chain: ATP synthase subunit a (229 aa).

The next 6 membrane-spanning stretches (helical) occupy residues 16 to 36 (YAHV…GAAA), 81 to 101 (YIPF…LGMI), 110 to 130 (NMNT…FQGV), 142 to 162 (FMGP…VSHI), 175 to 195 (VMMG…IGVP), and 196 to 216 (IPFY…FTLL).

It belongs to the ATPase A chain family. In terms of assembly, F-type ATPases have 2 components, CF(1) - the catalytic core - and CF(0) - the membrane proton channel. CF(1) has five subunits: alpha(3), beta(3), gamma(1), delta(1), epsilon(1). CF(0) has three main subunits: a(1), b(2) and c(9-12). The alpha and beta chains form an alternating ring which encloses part of the gamma chain. CF(1) is attached to CF(0) by a central stalk formed by the gamma and epsilon chains, while a peripheral stalk is formed by the delta and b chains.

The protein resides in the cell inner membrane. In terms of biological role, key component of the proton channel; it plays a direct role in the translocation of protons across the membrane. The polypeptide is ATP synthase subunit a (Bdellovibrio bacteriovorus (strain ATCC 15356 / DSM 50701 / NCIMB 9529 / HD100)).